We begin with the raw amino-acid sequence, 150 residues long: SsrA-binding protein (150 aa).

The protein belongs to the SmpB family.

The protein localises to the cytoplasm. Required for rescue of stalled ribosomes mediated by trans-translation. Binds to transfer-messenger RNA (tmRNA), required for stable association of tmRNA with ribosomes. tmRNA and SmpB together mimic tRNA shape, replacing the anticodon stem-loop with SmpB. tmRNA is encoded by the ssrA gene; the 2 termini fold to resemble tRNA(Ala) and it encodes a 'tag peptide', a short internal open reading frame. During trans-translation Ala-aminoacylated tmRNA acts like a tRNA, entering the A-site of stalled ribosomes, displacing the stalled mRNA. The ribosome then switches to translate the ORF on the tmRNA; the nascent peptide is terminated with the 'tag peptide' encoded by the tmRNA and targeted for degradation. The ribosome is freed to recommence translation, which seems to be the essential function of trans-translation. The protein is SsrA-binding protein of Magnetococcus marinus (strain ATCC BAA-1437 / JCM 17883 / MC-1).